A 297-amino-acid chain; its full sequence is 4-hydroxy-tetrahydrodipicolinate synthase (297 aa).

Thr-49 contributes to the pyruvate binding site. Tyr-137 acts as the Proton donor/acceptor in catalysis. Lys-166 (schiff-base intermediate with substrate) is an active-site residue. Residue Ile-208 coordinates pyruvate.

The protein belongs to the DapA family. In terms of assembly, homotetramer; dimer of dimers.

The protein resides in the cytoplasm. The catalysed reaction is L-aspartate 4-semialdehyde + pyruvate = (2S,4S)-4-hydroxy-2,3,4,5-tetrahydrodipicolinate + H2O + H(+). The protein operates within amino-acid biosynthesis; L-lysine biosynthesis via DAP pathway; (S)-tetrahydrodipicolinate from L-aspartate: step 3/4. Functionally, catalyzes the condensation of (S)-aspartate-beta-semialdehyde [(S)-ASA] and pyruvate to 4-hydroxy-tetrahydrodipicolinate (HTPA). This chain is 4-hydroxy-tetrahydrodipicolinate synthase, found in Porphyromonas gingivalis (strain ATCC 33277 / DSM 20709 / CIP 103683 / JCM 12257 / NCTC 11834 / 2561).